The following is a 563-amino-acid chain: Beta-catenin-like protein 1 (563 aa).

Residue M1 is modified to N-acetylmethionine. The interval 1-49 (MDVGELLSYQPNRGTKRPRDDEEEELKMRRRQAGTRERGRYREEEMTVV) is disordered. Positions 16–33 (KRPRDDEEEELKMRRRQA) match the Nuclear localization signal motif. Residues 34 to 45 (GTRERGRYREEE) are compositionally biased toward basic and acidic residues. 2 HEAT repeats span residues 79-129 (ESSV…VVAT) and 134-176 (YHLL…TLHE). K91 is subject to N6-acetyllysine. The short motif at 130 to 140 (MPDLYHLLVEL) is the Nuclear export signal (NES) element. ARM repeat units follow at residues 178-228 (EEGA…MAEF), 229-273 (RPEM…LQDN), 274-323 (DENR…CLML), 325-363 (SNRERFLKGEGLQLMNLMLREKKISRSSALKVLDHAMIG), and 364-417 (PEGT…LLRN). S389 carries the post-translational modification Phosphoserine. Residues 476-540 (DIEDEFYLRR…HIIKEYAENI (65 aa)) adopt a coiled-coil conformation. Phosphoserine is present on S545.

In terms of assembly, component of the PRP19-CDC5L splicing complex composed of a core complex comprising a homotetramer of PRPF19, CDC5L, PLRG1 and BCAS2, and at least three less stably associated proteins CTNNBL1, CWC15 and HSPA8. Interacts directly with CWC15 and CDC5L in the complex. Interacts with AICDA; the interaction is important for the antibody diversification activity of AICDA. Interacts with PRPF31 (via its NLS). Interacts (via its N-terminal NLS) with KPNA1 and KPNA2.

The protein resides in the nucleus. Its function is as follows. Component of the PRP19-CDC5L complex that forms an integral part of the spliceosome and is required for activating pre-mRNA splicing. Participates in AID/AICDA-mediated somatic hypermutation (SHM) and class-switch recombination (CSR), 2 processes resulting in the production of high-affinity, mutated isotype-switched antibodies. The protein is Beta-catenin-like protein 1 (CTNNBL1) of Bos taurus (Bovine).